The primary structure comprises 53 residues: UPF0391 membrane protein YPTS_0599 (53 aa).

The next 2 helical transmembrane spans lie at 4 to 24 (WGII…GGLA) and 27 to 47 (AAWA…ISLF).

The protein belongs to the UPF0391 family.

It localises to the cell membrane. In Yersinia pseudotuberculosis serotype IB (strain PB1/+), this protein is UPF0391 membrane protein YPTS_0599.